Consider the following 213-residue polypeptide: Ephrin-A2 (213 aa).

A signal peptide spans 1–24 (MAPAQRPLLPLLLLLLPLPPPPFA). The 141-residue stretch at 34–174 (SDRYAVYWNR…RLKVYVRPTN (141 aa)) folds into the Ephrin RBD domain. Residue Asn42 is glycosylated (N-linked (GlcNAc...) asparagine). Disulfide bonds link Cys73–Cys114 and Cys102–Cys163. Asn174 and Asn188 each carry an N-linked (GlcNAc...) asparagine glycan. A lipid anchor (GPI-anchor amidated asparagine) is attached at Asn188. The propeptide at 189-213 (NSCSSPGGCRLFLSTIPVLWTLLGS) is removed in mature form.

This sequence belongs to the ephrin family. Binds to the receptor tyrosine kinases EPHA3, EPHA4 and EPHA5. Interacts with EPHA8; activates EPHA8.

It is found in the cell membrane. Its function is as follows. Cell surface GPI-bound ligand for Eph receptors, a family of receptor tyrosine kinases which are crucial for migration, repulsion and adhesion during neuronal, vascular and epithelial development. Binds promiscuously Eph receptors residing on adjacent cells, leading to contact-dependent bidirectional signaling into neighboring cells. The signaling pathway downstream of the receptor is referred to as forward signaling while the signaling pathway downstream of the ephrin ligand is referred to as reverse signaling. With the EPHA2 receptor may play a role in bone remodeling through regulation of osteoclastogenesis and osteoblastogenesis. The chain is Ephrin-A2 (EFNA2) from Homo sapiens (Human).